Consider the following 166-residue polypeptide: Putative 4-hydroxy-4-methyl-2-oxoglutarate aldolase 1 (166 aa).

A2 carries the post-translational modification N-acetylalanine. Residues 81-84 (GGNP) and R103 each bind substrate. A divalent metal cation is bound at residue D104.

It belongs to the class II aldolase/RraA-like family. In terms of assembly, homotrimer. The cofactor is a divalent metal cation.

The enzyme catalyses 4-hydroxy-4-methyl-2-oxoglutarate = 2 pyruvate. It carries out the reaction oxaloacetate + H(+) = pyruvate + CO2. Catalyzes the aldol cleavage of 4-hydroxy-4-methyl-2-oxoglutarate (HMG) into 2 molecules of pyruvate. Also contains a secondary oxaloacetate (OAA) decarboxylase activity due to the common pyruvate enolate transition state formed following C-C bond cleavage in the retro-aldol and decarboxylation reactions. In Arabidopsis thaliana (Mouse-ear cress), this protein is Putative 4-hydroxy-4-methyl-2-oxoglutarate aldolase 1.